The sequence spans 275 residues: LexA repressor (275 aa).

Positions 1-50 are disordered; sequence MKRSTPRPARSQAALTTSSEESPDRVERGGDGVATVTDFPDGPPDETGLT. Positions 73-93 form a DNA-binding region, H-T-H motif; it reads MREIGEAVGLTSTSSVAHQLM. The interval 114-151 is disordered; sequence RSAESAVPDASAGHSPAADRAPSARRPPRGPSPIDSNP. Active-site for autocatalytic cleavage activity residues include Ser199 and Lys236.

The protein belongs to the peptidase S24 family. Homodimer.

The enzyme catalyses Hydrolysis of Ala-|-Gly bond in repressor LexA.. In terms of biological role, represses a number of genes involved in the response to DNA damage (SOS response), including recA and lexA. In the presence of single-stranded DNA, RecA interacts with LexA causing an autocatalytic cleavage which disrupts the DNA-binding part of LexA, leading to derepression of the SOS regulon and eventually DNA repair. In Acidothermus cellulolyticus (strain ATCC 43068 / DSM 8971 / 11B), this protein is LexA repressor.